Consider the following 61-residue polypeptide: Large ribosomal subunit protein uL30 (61 aa).

It belongs to the universal ribosomal protein uL30 family. In terms of assembly, part of the 50S ribosomal subunit.

In Neisseria gonorrhoeae (strain ATCC 700825 / FA 1090), this protein is Large ribosomal subunit protein uL30.